The primary structure comprises 1097 residues: DNA-directed RNA polymerase subunit beta (1097 aa).

Residues 1071–1097 form a disordered region; that stretch reads MQDVNPKRNTPSRPTYESLGTSEYAED. The segment covering 1077–1091 has biased composition (polar residues); the sequence is KRNTPSRPTYESLGT.

The protein belongs to the RNA polymerase beta chain family. In cyanobacteria the RNAP catalytic core is composed of 2 alpha, 1 beta, 1 beta', 1 gamma and 1 omega subunit. When a sigma factor is associated with the core the holoenzyme is formed, which can initiate transcription.

It carries out the reaction RNA(n) + a ribonucleoside 5'-triphosphate = RNA(n+1) + diphosphate. Functionally, DNA-dependent RNA polymerase catalyzes the transcription of DNA into RNA using the four ribonucleoside triphosphates as substrates. The sequence is that of DNA-directed RNA polymerase subunit beta from Prochlorococcus marinus subsp. pastoris (strain CCMP1986 / NIES-2087 / MED4).